The sequence spans 189 residues: Probable RNA 2'-phosphotransferase (189 aa).

The protein belongs to the KptA/TPT1 family.

Functionally, removes the 2'-phosphate from RNA via an intermediate in which the phosphate is ADP-ribosylated by NAD followed by a presumed transesterification to release the RNA and generate ADP-ribose 1''-2''-cyclic phosphate (APPR&gt;P). May function as an ADP-ribosylase. This chain is Probable RNA 2'-phosphotransferase, found in Streptomyces griseus subsp. griseus (strain JCM 4626 / CBS 651.72 / NBRC 13350 / KCC S-0626 / ISP 5235).